We begin with the raw amino-acid sequence, 493 residues long: Cobyric acid synthase (493 aa).

One can recognise a GATase cobBQ-type domain in the interval 246-440 (PIDIAVIKMP…IHGVFDGIVF (195 aa)). The active-site Nucleophile is the Cys326. His432 is an active-site residue.

It belongs to the CobB/CobQ family. CobQ subfamily.

The protein operates within cofactor biosynthesis; adenosylcobalamin biosynthesis. Catalyzes amidations at positions B, D, E, and G on adenosylcobyrinic A,C-diamide. NH(2) groups are provided by glutamine, and one molecule of ATP is hydrogenolyzed for each amidation. The polypeptide is Cobyric acid synthase (Clostridium botulinum (strain 657 / Type Ba4)).